The following is a 611-amino-acid chain: Mitogen-activated protein kinase 10 (611 aa).

The Protein kinase domain occupies 25-316 (YKIQEVIGKG…AEEALAHPYF (292 aa)). ATP contacts are provided by residues 31–39 (IGKGSYGVV) and lysine 54. Aspartate 151 (proton acceptor) is an active-site residue. Threonine 187 is modified (phosphothreonine). The TXY signature appears at 187–189 (TDY). Tyrosine 189 carries the phosphotyrosine modification. The tract at residues 394–481 (ENGGNGPVIP…RVVGPVLPYE (88 aa)) is disordered. Residues 426-439 (EQPRIGPSRDKPSD) are compositionally biased toward basic and acidic residues.

This sequence belongs to the protein kinase superfamily. CMGC Ser/Thr protein kinase family. MAP kinase subfamily. In terms of processing, dually phosphorylated on Thr-187 and Tyr-189, which activates the enzyme.

The catalysed reaction is L-seryl-[protein] + ATP = O-phospho-L-seryl-[protein] + ADP + H(+). The enzyme catalyses L-threonyl-[protein] + ATP = O-phospho-L-threonyl-[protein] + ADP + H(+). Activated by threonine and tyrosine phosphorylation. The polypeptide is Mitogen-activated protein kinase 10 (MPK10) (Oryza sativa subsp. japonica (Rice)).